A 178-amino-acid polypeptide reads, in one-letter code: Cytidylate kinase 2 (178 aa).

7 to 15 (GKSGCGNTT) provides a ligand contact to ATP.

The protein belongs to the cytidylate kinase family. Type 2 subfamily.

The protein localises to the cytoplasm. The catalysed reaction is CMP + ATP = CDP + ADP. The enzyme catalyses dCMP + ATP = dCDP + ADP. The polypeptide is Cytidylate kinase 2 (Borrelia garinii subsp. bavariensis (strain ATCC BAA-2496 / DSM 23469 / PBi) (Borreliella bavariensis)).